A 205-amino-acid polypeptide reads, in one-letter code: Ribosome maturation factor RimP (205 aa).

This sequence belongs to the RimP family.

It is found in the cytoplasm. In terms of biological role, required for maturation of 30S ribosomal subunits. The chain is Ribosome maturation factor RimP from Sinorhizobium fredii (strain NBRC 101917 / NGR234).